A 245-amino-acid chain; its full sequence is Biosynthetic peptidoglycan transglycosylase (245 aa).

A helical membrane pass occupies residues 20 to 42; sequence VYAGSVFAGAWLATQLFYLAQIA.

The protein belongs to the glycosyltransferase 51 family.

Its subcellular location is the cell inner membrane. The catalysed reaction is [GlcNAc-(1-&gt;4)-Mur2Ac(oyl-L-Ala-gamma-D-Glu-L-Lys-D-Ala-D-Ala)](n)-di-trans,octa-cis-undecaprenyl diphosphate + beta-D-GlcNAc-(1-&gt;4)-Mur2Ac(oyl-L-Ala-gamma-D-Glu-L-Lys-D-Ala-D-Ala)-di-trans,octa-cis-undecaprenyl diphosphate = [GlcNAc-(1-&gt;4)-Mur2Ac(oyl-L-Ala-gamma-D-Glu-L-Lys-D-Ala-D-Ala)](n+1)-di-trans,octa-cis-undecaprenyl diphosphate + di-trans,octa-cis-undecaprenyl diphosphate + H(+). The protein operates within cell wall biogenesis; peptidoglycan biosynthesis. Functionally, peptidoglycan polymerase that catalyzes glycan chain elongation from lipid-linked precursors. In Burkholderia cenocepacia (strain HI2424), this protein is Biosynthetic peptidoglycan transglycosylase.